The following is a 70-amino-acid chain: UPF0352 protein Sfri_2492 (70 aa).

It belongs to the UPF0352 family.

The chain is UPF0352 protein Sfri_2492 from Shewanella frigidimarina (strain NCIMB 400).